We begin with the raw amino-acid sequence, 492 residues long: Protein adenylyltransferase Fic (492 aa).

A compositionally biased stretch (low complexity) spans 1–18 (MGTEAEQPSPPAQQQDQE). Positions 1 to 26 (MGTEAEQPSPPAQQQDQENPPLCKAQ) are disordered. A helical transmembrane segment spans residues 33-55 (LYRFVLIFVAGSLAAWTFHALSS). TPR repeat units lie at residues 118–151 (ALGALRMAQDLYLAGKDDKAARLFEHALALAPRH) and 152–186 (PEVLLRYGEFLEHNQRNIVLADQYYFQALTISPSN). An Inhibitory (S/T)XXXE(G/N) motif motif is present at residues 243–248 (SVGIEG). Residues glutamate 247 and 328 to 331 (VGGH) each bind ATP. In terms of domain architecture, Fido spans 297–432 (ITIKDILELH…IRPFVRFIAD (136 aa)). Residue histidine 375 is part of the active site. ATP-binding positions include 379–386 (DGNGRTSR), 411–412 (YY), and asparagine 419.

It belongs to the fic family. In terms of assembly, homodimer; homodimerization may regulate adenylyltransferase and phosphodiesterase activities.

It is found in the membrane. It carries out the reaction L-tyrosyl-[protein] + ATP = O-(5'-adenylyl)-L-tyrosyl-[protein] + diphosphate. The enzyme catalyses L-threonyl-[protein] + ATP = 3-O-(5'-adenylyl)-L-threonyl-[protein] + diphosphate. The catalysed reaction is 3-O-(5'-adenylyl)-L-threonyl-[protein] + H2O = L-threonyl-[protein] + AMP + H(+). Its activity is regulated as follows. The side chain of Glu-247 determines which of the two opposing activities (AMPylase or de-AMPylase) will take place. In response to endoplasmic reticulum stress, mediates de-AMPylase activity. Adenylyltransferase activity is inhibited by the inhibitory helix present at the N-terminus: Glu-247 binds ATP and competes with ATP-binding at Arg-386, thereby preventing adenylyltransferase activity. In unstressed cells, disengagement of Glu-247 promotes adenylyltransferase activity. Activation dissociates ATP-binding from Glu-247, allowing ordered binding of the entire ATP moiety with the alpha-phosphate in an orientation that is productive for accepting an incoming target hydroxyl side chain. Its function is as follows. Protein that can both mediate the addition of adenosine 5'-monophosphate (AMP) to specific residues of target proteins (AMPylation), and the removal of the same modification from target proteins (de-AMPylation), depending on the context. The side chain of Glu-247 determines which of the two opposing activities (AMPylase or de-AMPylase) will take place. Acts as a key regulator of the unfolded protein response (UPR) by mediating AMPylation or de-AMPylation of Hsc70-3/BiP. In unstressed cells, acts as an adenylyltransferase by mediating AMPylation of Hsc70-3/BiP at 'Thr-518', thereby inactivating it. In response to endoplasmic reticulum stress, acts as a phosphodiesterase by mediating removal of ATP (de-AMPylation) from Hsc70-3/BiP at 'Thr-518', leading to restore HSPA5/BiP activity. This Drosophila melanogaster (Fruit fly) protein is Protein adenylyltransferase Fic.